Here is a 141-residue protein sequence, read N- to C-terminus: D-aminoacyl-tRNA deacylase (141 aa).

A Gly-cisPro motif, important for rejection of L-amino acids motif is present at residues 133-134 (GP).

Belongs to the DTD family. Homodimer.

It is found in the cytoplasm. The catalysed reaction is glycyl-tRNA(Ala) + H2O = tRNA(Ala) + glycine + H(+). The enzyme catalyses a D-aminoacyl-tRNA + H2O = a tRNA + a D-alpha-amino acid + H(+). In terms of biological role, an aminoacyl-tRNA editing enzyme that deacylates mischarged D-aminoacyl-tRNAs. Also deacylates mischarged glycyl-tRNA(Ala), protecting cells against glycine mischarging by AlaRS. Acts via tRNA-based rather than protein-based catalysis; rejects L-amino acids rather than detecting D-amino acids in the active site. By recycling D-aminoacyl-tRNA to D-amino acids and free tRNA molecules, this enzyme counteracts the toxicity associated with the formation of D-aminoacyl-tRNA entities in vivo and helps enforce protein L-homochirality. The protein is D-aminoacyl-tRNA deacylase of Kineococcus radiotolerans (strain ATCC BAA-149 / DSM 14245 / SRS30216).